The primary structure comprises 119 residues: Large ribosomal subunit protein uL18 (119 aa).

Belongs to the universal ribosomal protein uL18 family. As to quaternary structure, part of the 50S ribosomal subunit; part of the 5S rRNA/L5/L18/L25 subcomplex. Contacts the 5S and 23S rRNAs.

This is one of the proteins that bind and probably mediate the attachment of the 5S RNA into the large ribosomal subunit, where it forms part of the central protuberance. This chain is Large ribosomal subunit protein uL18, found in Mesorhizobium japonicum (strain LMG 29417 / CECT 9101 / MAFF 303099) (Mesorhizobium loti (strain MAFF 303099)).